Consider the following 245-residue polypeptide: 7-cyano-7-deazaguanine synthase 2 (245 aa).

F12–L22 serves as a coordination point for ATP. The Zn(2+) site is built by C200, C215, C218, and C221.

The protein belongs to the QueC family. It depends on Zn(2+) as a cofactor.

The enzyme catalyses 7-carboxy-7-deazaguanine + NH4(+) + ATP = 7-cyano-7-deazaguanine + ADP + phosphate + H2O + H(+). The protein operates within purine metabolism; 7-cyano-7-deazaguanine biosynthesis. Catalyzes the ATP-dependent conversion of 7-carboxy-7-deazaguanine (CDG) to 7-cyano-7-deazaguanine (preQ(0)). This Mesorhizobium japonicum (strain LMG 29417 / CECT 9101 / MAFF 303099) (Mesorhizobium loti (strain MAFF 303099)) protein is 7-cyano-7-deazaguanine synthase 2.